The following is a 271-amino-acid chain: Aminoglycoside N(3)-acetyltransferase III (271 aa).

CoA contacts are provided by histidine 31, alanine 32, serine 33, valine 34, and lysine 35. The a 2-deoxystreptamine antibiotic site is built by tyrosine 64, aspartate 72, and glutamate 102. Serine 104, valine 105, and phenylalanine 109 together coordinate CoA. 3 residues coordinate a 2-deoxystreptamine antibiotic: glutamate 123, tyrosine 146, and aspartate 170. CoA is bound by residues threonine 171 and threonine 173. A 2-deoxystreptamine antibiotic-binding residues include histidine 176, threonine 212, glycine 213, and phenylalanine 221.

Belongs to the antibiotic N-acetyltransferase family. In terms of assembly, homodimer.

It carries out the reaction a 2-deoxystreptamine antibiotic + acetyl-CoA = an N(3)-acetyl-2-deoxystreptamine antibiotic + CoA + H(+). In terms of biological role, resistance to antibiotics containing the 2-deoxy-streptamine ring including dibekacin, gentamicin, kanamycin, sisomicin, tobramycin and neomycin, but not to amikacin or netilmicin. Acetylates a broad range of both 4,5- and 4,6-disubstituted aminoglycosides, including neomycin, paromomycin, ribostamycin, sisomicin, gentamicin, tobramycin and kanamycin, with no preference of one disubstitution over the other. Acetylates sisomicin and kanamycin most and least efficiently, respectively. Does not modify plazomicin. In Pseudomonas aeruginosa, this protein is Aminoglycoside N(3)-acetyltransferase III.